Reading from the N-terminus, the 273-residue chain is Salivary glue protein Sgs-3 (273 aa).

Positions 1–23 (MKLTIAISLASILLLSVAHVAQG) are cleaved as a signal peptide. Residues 47 to 57 (TTTTTTTTCAP) are compositionally biased toward low complexity. The interval 47–225 (TTTTTTTTCA…TPKPTNKPGC (179 aa)) is disordered. A compositionally biased stretch (pro residues) spans 58-67 (PTRPPPPPCT). The span at 83-225 (RRTTTTTRQT…TPKPTNKPGC (143 aa)) shows a compositional bias: low complexity.

The chain is Salivary glue protein Sgs-3 (Sgs3) from Drosophila yakuba (Fruit fly).